The sequence spans 376 residues: Light-dependent chlorophyll f synthase (376 aa).

The disordered stretch occupies residues 1 to 22 (MKLESDHVIATSDSSDYTSEPT). Over residues 11–22 (TSDSSDYTSEPT) the composition is skewed to polar residues. Helical transmembrane passes span 51–68 (YVGW…TAAT), 140–155 (HFLI…EWEL), 164–178 (WISL…ASVS), 219–240 (LHQL…HGSL), and 298–312 (FLAA…SAAL). Histidine 140 provides a ligand contact to a chlorophyll. Histidine 220 serves as a coordination point for a chlorophyll.

Belongs to the reaction center PufL/M/PsbA/D family. In terms of assembly, homodimer.

The protein localises to the cellular thylakoid membrane. Its function is as follows. Synthesizes chlorophyll f or chlorophyllide f (Chl f, 2-formyl chlorophyll a), probably by oxidation of chlorophyll a or chlorophyllide a and reduction of plastoquinone. The reaction is probably light-dependent. Chl f absorbs far red light (FRL, 707 nm in 100% methanol), and is synthesized when cells are grown in FRL, where it provides the advantage of extending the spectral range of harvested light in terrestrial cyanobacteria. When ectopically expressed in Synechococcus PCC 7002 (which does not grow in FRL and does not make Chl f) produces Chl f (0.059% of total chlorophyll). The polypeptide is Light-dependent chlorophyll f synthase (Chlorogloeopsis fritschii (strain PCC 9212)).